We begin with the raw amino-acid sequence, 413 residues long: 2,3-diketo-5-methylthiopentyl-1-phosphate enolase (413 aa).

Lysine 98 functions as the Proton acceptor in the catalytic mechanism. Residues lysine 147, 173-176, histidine 264, glycine 337, and 359-360 contribute to the substrate site; these read KDDE and GG. Mg(2+) is bound by residues lysine 173, aspartate 175, and glutamate 176. Lysine 173 is modified (N6-carboxylysine).

The protein belongs to the RuBisCO large chain family. Type IV subfamily. In terms of assembly, homodimer. The cofactor is Mg(2+).

It catalyses the reaction 5-methylsulfanyl-2,3-dioxopentyl phosphate = 2-hydroxy-5-methylsulfanyl-3-oxopent-1-enyl phosphate. It functions in the pathway amino-acid biosynthesis; L-methionine biosynthesis via salvage pathway; L-methionine from S-methyl-5-thio-alpha-D-ribose 1-phosphate: step 3/6. Catalyzes the enolization of 2,3-diketo-5-methylthiopentyl-1-phosphate (DK-MTP-1-P) into 2-hydroxy-3-keto-5-methylthiopentenyl-1-phosphate (HK-MTPenyl-1-P). In Geobacillus kaustophilus (strain HTA426), this protein is 2,3-diketo-5-methylthiopentyl-1-phosphate enolase (mtnW).